A 783-amino-acid chain; its full sequence is Putative ATP-dependent DNA helicase fml2 (783 aa).

The 169-residue stretch at 118-286 folds into the Helicase ATP-binding domain; sequence FCEQALFHNL…KVVDCLHISK (169 aa). 131–138 lines the ATP pocket; that stretch reads LPTGLGKT. A DEAH box motif is present at residues 234 to 237; that stretch reads DEAH. Residues 450–619 form the Helicase C-terminal domain; that stretch reads KMNHLLELLK…GKKIALKKDV (170 aa).

This sequence belongs to the DEAD box helicase family. DEAH subfamily. FANCM sub-subfamily.

Its subcellular location is the nucleus. It is found in the nucleolus. It catalyses the reaction ATP + H2O = ADP + phosphate + H(+). The chain is Putative ATP-dependent DNA helicase fml2 from Schizosaccharomyces pombe (strain 972 / ATCC 24843) (Fission yeast).